The chain runs to 107 residues: Proteinase inhibitor I-B (107 aa).

The first 22 residues, 1 to 22 (MVKFAHVVAFLLLASLFQPLTA), serve as a signal peptide directing secretion. Residues 23-39 (RDLEINVLQLDVSQSGC) constitute a propeptide that is removed on maturation.

Belongs to the protease inhibitor I13 (potato type I serine protease inhibitor) family.

Its subcellular location is the secreted. This is Proteinase inhibitor I-B (TIMPA) from Nicotiana tabacum (Common tobacco).